We begin with the raw amino-acid sequence, 1471 residues long: Myosin-51 (1471 aa).

The Myosin N-terminal SH3-like domain maps to 7–61; it reads SVGSECWVSNNNGHWDAARLIEIKDNGGGKVVATVAKSSGVLETVNYQQLQNRNI. The 685-residue stretch at 65 to 749 folds into the Myosin motor domain; the sequence is ESPSDLTNLP…VIGNFEEAHR (685 aa). 159-166 is a binding site for ATP; that stretch reads GESGAGKT. The segment at 628 to 650 is actin-binding; sequence LSQLMTTVSSTNVHYIRCIKPNE. 6 consecutive IQ domains span residues 753 to 773, 776 to 796, 801 to 821, 824 to 844, 849 to 869, and 872 to 892; these read SKSTVLLQSAIRGFFTRKEYQ, VKFIIKLQSVIMGWLTRQRFE, ERAAILIQAHWRSYIQRKRYL, IKCAIVIQSIVRKNIAYSRYI, ESSATLLAKFWRAYNARKTFR, and KKSVIALQCVSRSVLTRRYLR. A coiled-coil region spans residues 909–952; that stretch reads KNLQASITEVSKQLKSNSKKVTVLRNKLNILNNSLSKWKCLIKK. One can recognise a Dilute domain in the interval 1171–1417; the sequence is EKPLQAVLYW…SKAVEALSCK (247 aa).

Belongs to the TRAFAC class myosin-kinesin ATPase superfamily. Myosin family.

The protein resides in the cytoplasm. In terms of biological role, involved in cytokinesis. The polypeptide is Myosin-51 (myo51) (Schizosaccharomyces pombe (strain 972 / ATCC 24843) (Fission yeast)).